Consider the following 210-residue polypeptide: Ribosomal RNA large subunit methyltransferase E (210 aa).

Residues G61, W63, D81, D97, and D122 each coordinate S-adenosyl-L-methionine. K162 acts as the Proton acceptor in catalysis. Basic and acidic residues predominate over residues 187-196 (KPEASRKRSP). A disordered region spans residues 187–210 (KPEASRKRSPEVYALGQGKRAHMK).

This sequence belongs to the class I-like SAM-binding methyltransferase superfamily. RNA methyltransferase RlmE family.

It localises to the cytoplasm. It catalyses the reaction uridine(2552) in 23S rRNA + S-adenosyl-L-methionine = 2'-O-methyluridine(2552) in 23S rRNA + S-adenosyl-L-homocysteine + H(+). Functionally, specifically methylates the uridine in position 2552 of 23S rRNA at the 2'-O position of the ribose in the fully assembled 50S ribosomal subunit. The protein is Ribosomal RNA large subunit methyltransferase E of Stenotrophomonas maltophilia (strain K279a).